We begin with the raw amino-acid sequence, 298 residues long: Ribosomal RNA small subunit methyltransferase A (298 aa).

The S-adenosyl-L-methionine site is built by N35, L37, G62, E83, D108, and N133.

Belongs to the class I-like SAM-binding methyltransferase superfamily. rRNA adenine N(6)-methyltransferase family. RsmA subfamily.

Its subcellular location is the cytoplasm. The catalysed reaction is adenosine(1518)/adenosine(1519) in 16S rRNA + 4 S-adenosyl-L-methionine = N(6)-dimethyladenosine(1518)/N(6)-dimethyladenosine(1519) in 16S rRNA + 4 S-adenosyl-L-homocysteine + 4 H(+). Functionally, specifically dimethylates two adjacent adenosines (A1518 and A1519) in the loop of a conserved hairpin near the 3'-end of 16S rRNA in the 30S particle. May play a critical role in biogenesis of 30S subunits. The polypeptide is Ribosomal RNA small subunit methyltransferase A (Streptococcus pyogenes serotype M2 (strain MGAS10270)).